A 136-amino-acid polypeptide reads, in one-letter code: Early E3 15.3 kDa protein (136 aa).

The protein belongs to the adenoviridae E3_15 family.

Functionally, protects virus-infected cells from TNF-induced cytolysis. In Human adenovirus B serotype 3 (HAdV-3), this protein is Early E3 15.3 kDa protein.